The sequence spans 390 residues: Methylthioribose-1-phosphate isomerase (390 aa).

Substrate contacts are provided by residues 53–55 (RGA), arginine 90, and glutamine 207. The active-site Proton donor is the aspartate 248. Residue 258 to 259 (NK) coordinates substrate.

This sequence belongs to the EIF-2B alpha/beta/delta subunits family. MtnA subfamily.

The catalysed reaction is 5-(methylsulfanyl)-alpha-D-ribose 1-phosphate = 5-(methylsulfanyl)-D-ribulose 1-phosphate. It carries out the reaction 5-deoxy-alpha-D-ribose 1-phosphate = 5-deoxy-D-ribulose 1-phosphate. It participates in amino-acid biosynthesis; L-methionine biosynthesis via salvage pathway; L-methionine from S-methyl-5-thio-alpha-D-ribose 1-phosphate: step 1/6. Functionally, catalyzes the interconversion of methylthioribose-1-phosphate (MTR-1-P) into methylthioribulose-1-phosphate (MTRu-1-P). Also catalyzes the interconversion of 5-deoxyribose 1-phosphate and 5-deoxyribulose 1-phosphate. Part of a bifunctional DHAP-shunt salvage pathway for SAM by-products. This is Methylthioribose-1-phosphate isomerase from Rhodospirillum rubrum (strain ATCC 11170 / ATH 1.1.1 / DSM 467 / LMG 4362 / NCIMB 8255 / S1).